We begin with the raw amino-acid sequence, 401 residues long: E3 ubiquitin-protein ligase RGLG4 (401 aa).

A disordered region spans residues 1–43 (MTMGNFLKRFGSGKSRSSRNMTLGTTSSQSHEPSPSDPSLSLA). Positions 8 to 19 (KRFGSGKSRSSR) are enriched in low complexity. Polar residues predominate over residues 20–32 (NMTLGTTSSQSHE). The VWFA domain occupies 79–299 (NLILGVDFTK…KETAFALAAL (221 aa)). The disordered stretch occupies residues 326-350 (VPRPPPIPYTPPTNAELPSTASPAS). Over residues 327–336 (PRPPPIPYTP) the composition is skewed to pro residues. Positions 341–350 (ELPSTASPAS) are enriched in polar residues. The RING-type zinc-finger motif lies at 357–390 (CPICLTNRKDVAFSCGHMTCGDCGSKISNCPICR).

As to quaternary structure, interacts with UBC30, GRXS17 and GLB3. In terms of tissue distribution, widely expressed.

It localises to the cytoplasm. The protein localises to the nucleus. The catalysed reaction is S-ubiquitinyl-[E2 ubiquitin-conjugating enzyme]-L-cysteine + [acceptor protein]-L-lysine = [E2 ubiquitin-conjugating enzyme]-L-cysteine + N(6)-ubiquitinyl-[acceptor protein]-L-lysine.. Its function is as follows. Possesses E3 ubiquitin-protein ligase in vitro. Acts as upstream modulator of jasmonate (JA) signaling in response to various stimuli, such as JA-inhibited root growth, JA-inductive gene expression, coronatine-mediated pathogen susceptibility, wound-stimulated expression of JA-responsive genes and wound-induced JA biosynthesis. Controls fumonisin B1 (FB1)-triggered programmed cell death (PCD) by modulating the JA signaling pathway. May mediate salicylic acid (SA) suppression of JA signaling in FB1-induced responses. May mediate the formation of 'Lys-48'-linked multiubiquitin chains. Mediates the polyubiquitination and subsequent proteasomal degradation of the target protein GRXS17. This chain is E3 ubiquitin-protein ligase RGLG4, found in Arabidopsis thaliana (Mouse-ear cress).